The primary structure comprises 93 residues: Small ribosomal subunit protein uS19 (93 aa).

Belongs to the universal ribosomal protein uS19 family.

Functionally, protein S19 forms a complex with S13 that binds strongly to the 16S ribosomal RNA. This is Small ribosomal subunit protein uS19 from Nitratidesulfovibrio vulgaris (strain DSM 19637 / Miyazaki F) (Desulfovibrio vulgaris).